The primary structure comprises 232 residues: Syntaxin-51 (232 aa).

Residues 1–208 (MASSSDSWMR…NKNMRSGCSC (208 aa)) are Cytoplasmic-facing. Residues 136 to 198 (RQVMREQDEG…RRVQKSLAVM (63 aa)) enclose the t-SNARE coiled-coil homology domain. Residues 209–229 (MSMLLSVLGIVGLAVVIWMLV) form a helical; Anchor for type IV membrane protein membrane-spanning segment. Residues 230 to 232 (KYM) lie on the Vesicular side of the membrane.

It belongs to the syntaxin family. Interacts with VTI11 and either SYP21, or SYP22, or SYP61 in the prevacuolar compartment, or with VTI12 and SYP61 in the trans-Golgi network to form t-SNARE complexes. In terms of tissue distribution, expressed in root, leaf, stem, flower and silique.

The protein resides in the golgi apparatus. The protein localises to the trans-Golgi network membrane. It localises to the prevacuolar compartment membrane. In terms of biological role, vesicle trafficking protein that functions in the secretory pathway. The polypeptide is Syntaxin-51 (SYP51) (Arabidopsis thaliana (Mouse-ear cress)).